A 120-amino-acid polypeptide reads, in one-letter code: Large ribosomal subunit protein bL12 (120 aa).

Belongs to the bacterial ribosomal protein bL12 family. In terms of assembly, homodimer. Part of the ribosomal stalk of the 50S ribosomal subunit. Forms a multimeric L10(L12)X complex, where L10 forms an elongated spine to which 2 to 4 L12 dimers bind in a sequential fashion. Binds GTP-bound translation factors.

In terms of biological role, forms part of the ribosomal stalk which helps the ribosome interact with GTP-bound translation factors. Is thus essential for accurate translation. The chain is Large ribosomal subunit protein bL12 from Lachnoclostridium phytofermentans (strain ATCC 700394 / DSM 18823 / ISDg) (Clostridium phytofermentans).